The sequence spans 867 residues: Alanine--tRNA ligase (867 aa).

His-558, His-562, Cys-660, and His-664 together coordinate Zn(2+).

Belongs to the class-II aminoacyl-tRNA synthetase family. Zn(2+) serves as cofactor.

The protein resides in the cytoplasm. The enzyme catalyses tRNA(Ala) + L-alanine + ATP = L-alanyl-tRNA(Ala) + AMP + diphosphate. Functionally, catalyzes the attachment of alanine to tRNA(Ala) in a two-step reaction: alanine is first activated by ATP to form Ala-AMP and then transferred to the acceptor end of tRNA(Ala). Also edits incorrectly charged Ser-tRNA(Ala) and Gly-tRNA(Ala) via its editing domain. The polypeptide is Alanine--tRNA ligase (Fervidobacterium nodosum (strain ATCC 35602 / DSM 5306 / Rt17-B1)).